The sequence spans 600 residues: ATP-dependent lipid A-core flippase (600 aa).

Transmembrane regions (helical) follow at residues 27–47, 83–103, 174–194, and 267–287; these read ISLF…QPML, LLII…NYFL, LLFM…LIAV, and PLLQ…VLYL. The 292-residue stretch at 31–322 folds into the ABC transmembrane type-1 domain; it reads LISIVGFLIF…LSEVSSTIQK (292 aa). In terms of domain architecture, ABC transporter spans 354–590; it reads LDVRNLSFTY…NGYYARLNAM (237 aa). 388 to 395 is a binding site for ATP; the sequence is GRSGSGKS.

Belongs to the ABC transporter superfamily. Lipid exporter (TC 3.A.1.106) family. As to quaternary structure, homodimer.

It localises to the cell inner membrane. It carries out the reaction ATP + H2O + lipid A-core oligosaccharideSide 1 = ADP + phosphate + lipid A-core oligosaccharideSide 2.. Functionally, involved in lipopolysaccharide (LPS) biosynthesis. Translocates lipid A-core from the inner to the outer leaflet of the inner membrane. Transmembrane domains (TMD) form a pore in the inner membrane and the ATP-binding domain (NBD) is responsible for energy generation. This Pseudomonas fluorescens (strain Pf0-1) protein is ATP-dependent lipid A-core flippase.